Consider the following 386-residue polypeptide: S-adenosylmethionine synthase (386 aa).

His-16 is a binding site for ATP. Position 18 (Asp-18) interacts with Mg(2+). Glu-44 contributes to the K(+) binding site. Glu-57 and Gln-100 together coordinate L-methionine. The interval 100-110 is flexible loop; that stretch reads QSGDIAMGVDE. ATP is bound by residues 165 to 167, Asp-240, 246 to 247, Ala-263, and Lys-267; these read DAK and RK. Position 240 (Asp-240) interacts with L-methionine. Lys-271 contributes to the L-methionine binding site.

It belongs to the AdoMet synthase family. Homotetramer; dimer of dimers. It depends on Mg(2+) as a cofactor. K(+) serves as cofactor.

The protein localises to the cytoplasm. The catalysed reaction is L-methionine + ATP + H2O = S-adenosyl-L-methionine + phosphate + diphosphate. Its pathway is amino-acid biosynthesis; S-adenosyl-L-methionine biosynthesis; S-adenosyl-L-methionine from L-methionine: step 1/1. In terms of biological role, catalyzes the formation of S-adenosylmethionine (AdoMet) from methionine and ATP. The overall synthetic reaction is composed of two sequential steps, AdoMet formation and the subsequent tripolyphosphate hydrolysis which occurs prior to release of AdoMet from the enzyme. This Hahella chejuensis (strain KCTC 2396) protein is S-adenosylmethionine synthase.